The primary structure comprises 216 residues: Thymidylate kinase (216 aa).

Position 10–17 (10–17 (GPDGAGKS)) interacts with ATP.

Belongs to the thymidylate kinase family.

The catalysed reaction is dTMP + ATP = dTDP + ADP. Its function is as follows. Phosphorylation of dTMP to form dTDP in both de novo and salvage pathways of dTTP synthesis. This Lactobacillus acidophilus (strain ATCC 700396 / NCK56 / N2 / NCFM) protein is Thymidylate kinase.